A 188-amino-acid polypeptide reads, in one-letter code: GMP synthase [glutamine-hydrolyzing] subunit A (188 aa).

One can recognise a Glutamine amidotransferase type-1 domain in the interval 1–188; it reads MIVIMDNGGQ…RNFAELCGEL (188 aa). The active-site Nucleophile is Cys78. Residues His165 and Glu167 contribute to the active site.

In terms of assembly, heterodimer composed of a glutamine amidotransferase subunit (A) and a GMP-binding subunit (B).

The enzyme catalyses XMP + L-glutamine + ATP + H2O = GMP + L-glutamate + AMP + diphosphate + 2 H(+). It participates in purine metabolism; GMP biosynthesis; GMP from XMP (L-Gln route): step 1/1. Catalyzes the synthesis of GMP from XMP. The sequence is that of GMP synthase [glutamine-hydrolyzing] subunit A from Thermococcus kodakarensis (strain ATCC BAA-918 / JCM 12380 / KOD1) (Pyrococcus kodakaraensis (strain KOD1)).